The primary structure comprises 61 residues: Large ribosomal subunit protein uL30 (61 aa).

The protein belongs to the universal ribosomal protein uL30 family. In terms of assembly, part of the 50S ribosomal subunit.

The chain is Large ribosomal subunit protein uL30 from Exiguobacterium sp. (strain ATCC BAA-1283 / AT1b).